Consider the following 349-residue polypeptide: tRNA pseudouridine synthase D (349 aa).

Residue F27 coordinates substrate. D80 (nucleophile) is an active-site residue. N129 provides a ligand contact to substrate. Positions 155–303 constitute a TRUD domain; it reads GVPNYFGAQR…VEAARRAMLL (149 aa). A substrate-binding site is contributed by F329.

Belongs to the pseudouridine synthase TruD family.

The enzyme catalyses uridine(13) in tRNA = pseudouridine(13) in tRNA. Its function is as follows. Responsible for synthesis of pseudouridine from uracil-13 in transfer RNAs. This Escherichia coli O81 (strain ED1a) protein is tRNA pseudouridine synthase D.